The primary structure comprises 208 residues: Thymidylate kinase (208 aa).

Position 10-17 (10-17 (GGEGVGKS)) interacts with ATP.

This sequence belongs to the thymidylate kinase family.

It carries out the reaction dTMP + ATP = dTDP + ADP. Its function is as follows. Phosphorylation of dTMP to form dTDP in both de novo and salvage pathways of dTTP synthesis. The chain is Thymidylate kinase from Rhizorhabdus wittichii (strain DSM 6014 / CCUG 31198 / JCM 15750 / NBRC 105917 / EY 4224 / RW1) (Sphingomonas wittichii).